Reading from the N-terminus, the 299-residue chain is Cuticle collagen 34 (299 aa).

The disordered stretch occupies residues 105–282 (PGPAGTPGKP…GSPGERGICP (178 aa)). Residues 129 to 162 (PGRPPQQPCEPITPPPCKPCPQGPPGPPGPPGPP) show a composition bias toward pro residues. Residues 164-181 (DSGEPGSPGLPGQDAAPG) show a composition bias toward low complexity. 2 stretches are compositionally biased toward pro residues: residues 182–195 (EPGP…PGAP) and 215–233 (PGEP…PGSP). Positions 216 to 278 (GEPGPPGEAG…AGPPGSPGER (63 aa)) are triple-helical region. Residues 251 to 263 (NGPDGQPGADGNP) show a composition bias toward low complexity. Over residues 265–274 (APGPAGPPGS) the composition is skewed to pro residues.

The protein belongs to the cuticular collagen family. Collagen polypeptide chains are complexed within the cuticle by disulfide bonds and other types of covalent cross-links.

In terms of biological role, nematode cuticles are composed largely of collagen-like proteins. The cuticle functions both as an exoskeleton and as a barrier to protect the worm from its environment. The chain is Cuticle collagen 34 (col-34) from Caenorhabditis elegans.